Here is a 79-residue protein sequence, read N- to C-terminus: Cell division protein ZapB (79 aa).

Residues 4-78 (EVFEKLEAKV…LRALLGKMEE (75 aa)) adopt a coiled-coil conformation.

Belongs to the ZapB family. Homodimer. The ends of the coiled-coil dimer bind to each other, forming polymers. Interacts with FtsZ.

The protein resides in the cytoplasm. Its function is as follows. Non-essential, abundant cell division factor that is required for proper Z-ring formation. It is recruited early to the divisome by direct interaction with FtsZ, stimulating Z-ring assembly and thereby promoting cell division earlier in the cell cycle. Its recruitment to the Z-ring requires functional FtsA or ZipA. This is Cell division protein ZapB from Pectobacterium atrosepticum (strain SCRI 1043 / ATCC BAA-672) (Erwinia carotovora subsp. atroseptica).